The primary structure comprises 68 residues: MALARAWKQMSWFYYQYLLVTALYMLEPWERTVFNSMLVSIVGMALYTGYVFMPQHIMAILHYFEIVQ.

Topologically, residues 1–9 (MALARAWKQ) are cytoplasmic. A helical transmembrane segment spans residues 10–26 (MSWFYYQYLLVTALYML). At 27-31 (EPWER) the chain is on the lumenal side. A helical membrane pass occupies residues 32–54 (TVFNSMLVSIVGMALYTGYVFMP). The Cytoplasmic portion of the chain corresponds to 55-68 (QHIMAILHYFEIVQ).

The protein belongs to the SPTSS family. SPTSSA subfamily. Component of the serine palmitoyltransferase (SPT) complex, which is composed of SPTLC1, SPTLC2 or SPTLC3 and SPTSSA or SPTSSB. The heterodimer consisting of SPTLC1 and SPTLC2/SPTLC3 forms the catalytic core of the enzyme, while SPTSSA or SPTSSB subunits determine substrate specificity. SPT also interacts with ORMDL proteins, especially ORMDL3, which negatively regulate SPT activity in the presence of ceramides. Interacts with MBOAT7; the interaction plays a role in MBOAT7 localization to mitochondria-associated membranes.

Its subcellular location is the endoplasmic reticulum membrane. It functions in the pathway lipid metabolism; sphingolipid metabolism. Functionally, component of the serine palmitoyltransferase multisubunit enzyme (SPT) that catalyzes the initial and rate-limiting step in sphingolipid biosynthesis by condensing L-serine and activated acyl-CoA (most commonly palmitoyl-CoA) to form long-chain bases. The SPT complex is composed of SPTLC1, SPTLC2 or SPTLC3 and SPTSSA or SPTSSB. Within this complex, the heterodimer consisting of SPTLC1 and SPTLC2/SPTLC3 forms the catalytic core. Within the SPT complex, SPTSSA stimulates the catalytic activity and plays a role in substrate specificity, which depends upon the overall complex composition. The SPTLC1-SPTLC2-SPTSSA complex shows a strong preference for C16-CoA substrate, while the SPTLC1-SPTLC3-SPTSSA isozyme uses both C14-CoA and C16-CoA as substrates, with a slight preference for C14-CoA. Independently of its action as a SPT component, may be involved in MBOAT7 localization to mitochondria-associated membranes, a membrane bridge between the endoplasmic reticulum and mitochondria, may hence affect MBOAT7-catalyzed incorporation of arachidonic acid into phosphatidylinositol. The protein is Serine palmitoyltransferase small subunit A (SPTSSA) of Bos taurus (Bovine).